The following is a 693-amino-acid chain: Polyribonucleotide nucleotidyltransferase (693 aa).

Mg(2+)-binding residues include Asp-486 and Asp-492. Positions Pro-553–Ile-612 constitute a KH domain. In terms of domain architecture, S1 motif spans Gly-622–Lys-690.

Belongs to the polyribonucleotide nucleotidyltransferase family. As to quaternary structure, component of the RNA degradosome, which is a multiprotein complex involved in RNA processing and mRNA degradation. Mg(2+) is required as a cofactor.

It is found in the cytoplasm. It carries out the reaction RNA(n+1) + phosphate = RNA(n) + a ribonucleoside 5'-diphosphate. In terms of biological role, involved in mRNA degradation. Catalyzes the phosphorolysis of single-stranded polyribonucleotides processively in the 3'- to 5'-direction. In Thioalkalivibrio sulfidiphilus (strain HL-EbGR7), this protein is Polyribonucleotide nucleotidyltransferase.